The following is a 338-amino-acid chain: Nuclear hormone receptor family member nhr-52 (338 aa).

A DNA-binding region (nuclear receptor) is located at residues 1–75 (MKCLVCCSYA…IGMRFSEPKQ (75 aa)). 2 consecutive NR C4-type zinc fingers follow at residues 3–23 (CLVC…CSAC) and 39–63 (CKYD…FKKC). The NR LBD domain occupies 98–337 (KDGVHYSNFL…KKLVNDIIIR (240 aa)).

Belongs to the nuclear hormone receptor family.

It localises to the nucleus. Orphan nuclear receptor. This Caenorhabditis elegans protein is Nuclear hormone receptor family member nhr-52 (nhr-52).